The chain runs to 249 residues: Exosome complex component Rrp41 (249 aa).

This sequence belongs to the RNase PH family. Rrp41 subfamily. As to quaternary structure, component of the archaeal exosome complex. Forms a hexameric ring-like arrangement composed of 3 Rrp41-Rrp42 heterodimers. The hexameric ring associates with a trimer of Rrp4 and/or Csl4 subunits.

The protein localises to the cytoplasm. Catalytic component of the exosome, which is a complex involved in RNA degradation. Has 3'-&gt;5' exoribonuclease activity. Can also synthesize heteromeric RNA-tails. This chain is Exosome complex component Rrp41, found in Thermococcus onnurineus (strain NA1).